The primary structure comprises 684 residues: UvrABC system protein C (684 aa).

Residues 16–95 (TDPGVYKFRD…IKRFDPRFNV (80 aa)) enclose the GIY-YIG domain. Residues 208–243 (APVRKRVTQRMEEAAENLEFELAARLRDDLGAIDKL) form the UVR domain. Over residues 332 to 352 (EAAEDAKLERRGVDQESHAEP) the composition is skewed to basic and acidic residues. The interval 332–357 (EAAEDAKLERRGVDQESHAEPRQGNA) is disordered.

Belongs to the UvrC family. Interacts with UvrB in an incision complex.

The protein resides in the cytoplasm. The UvrABC repair system catalyzes the recognition and processing of DNA lesions. UvrC both incises the 5' and 3' sides of the lesion. The N-terminal half is responsible for the 3' incision and the C-terminal half is responsible for the 5' incision. This chain is UvrABC system protein C, found in Corynebacterium aurimucosum (strain ATCC 700975 / DSM 44827 / CIP 107346 / CN-1) (Corynebacterium nigricans).